The chain runs to 390 residues: GTPase Obg (390 aa).

Residues 1 to 159 form the Obg domain; that stretch reads MKFIDESLIR…RDLLLELMLL (159 aa). An OBG-type G domain is found at 160–333; that stretch reads ADVGMLGLPN…LCRDIMDFII (174 aa). GTP contacts are provided by residues 166-173, 191-195, 213-216, 283-286, and 314-316; these read GLPNAGKS, FTTLV, DIPG, NKID, and SAA. The Mg(2+) site is built by Ser173 and Thr193. A disordered region spans residues 363–382; that stretch reads EHQFDDDEDWDDDWSEEDDE. A compositionally biased stretch (acidic residues) spans 366 to 382; sequence FDDDEDWDDDWSEEDDE.

The protein belongs to the TRAFAC class OBG-HflX-like GTPase superfamily. OBG GTPase family. In terms of assembly, monomer. Mg(2+) is required as a cofactor.

The protein localises to the cytoplasm. An essential GTPase which binds GTP, GDP and possibly (p)ppGpp with moderate affinity, with high nucleotide exchange rates and a fairly low GTP hydrolysis rate. Plays a role in control of the cell cycle, stress response, ribosome biogenesis and in those bacteria that undergo differentiation, in morphogenesis control. The chain is GTPase Obg from Haemophilus influenzae (strain ATCC 51907 / DSM 11121 / KW20 / Rd).